The following is a 285-amino-acid chain: Inositol oxygenase (285 aa).

Arg-29 contributes to the substrate binding site. Ser-33 is modified (phosphoserine). Residue 85-87 participates in substrate binding; sequence DES. The Fe cation site is built by His-98, His-123, and Asp-124. Substrate contacts are provided by residues Lys-127 and 141–142; that span reads GD. Residues His-194, His-220, and Asp-253 each contribute to the Fe cation site. Substrate is bound at residue 220 to 221; that stretch reads HS.

Belongs to the myo-inositol oxygenase family. The cofactor is Fe cation. In terms of tissue distribution, kidney specific.

The protein localises to the cytoplasm. The enzyme catalyses myo-inositol + O2 = D-glucuronate + H2O + H(+). It functions in the pathway polyol metabolism; myo-inositol degradation into D-glucuronate; D-glucuronate from myo-inositol: step 1/1. This chain is Inositol oxygenase (MIOX), found in Homo sapiens (Human).